Here is a 229-residue protein sequence, read N- to C-terminus: Large ribosomal subunit protein uL1 (229 aa).

Belongs to the universal ribosomal protein uL1 family. In terms of assembly, part of the 50S ribosomal subunit.

Functionally, binds directly to 23S rRNA. The L1 stalk is quite mobile in the ribosome, and is involved in E site tRNA release. In terms of biological role, protein L1 is also a translational repressor protein, it controls the translation of the L11 operon by binding to its mRNA. The polypeptide is Large ribosomal subunit protein uL1 (Haemophilus ducreyi (strain 35000HP / ATCC 700724)).